A 269-amino-acid chain; its full sequence is Eukaryotic translation initiation factor 3 subunit G-1 (269 aa).

The RRM domain occupies 188–266; that stretch reads AAIRISNLSE…LILSVEWSKP (79 aa).

Belongs to the eIF-3 subunit G family. As to quaternary structure, component of the eukaryotic translation initiation factor 3 (eIF-3) complex. The eIF-3 complex interacts with pix.

Its subcellular location is the cytoplasm. In terms of biological role, RNA-binding component of the eukaryotic translation initiation factor 3 (eIF-3) complex, which is involved in protein synthesis of a specialized repertoire of mRNAs and, together with other initiation factors, stimulates binding of mRNA and methionyl-tRNAi to the 40S ribosome. The eIF-3 complex specifically targets and initiates translation of a subset of mRNAs involved in cell proliferation. This subunit can bind 18S rRNA. In Drosophila willistoni (Fruit fly), this protein is Eukaryotic translation initiation factor 3 subunit G-1.